The chain runs to 463 residues: Cysteine--tRNA ligase (463 aa).

C33 contributes to the Zn(2+) binding site. Residues 35–45 (PTVYDFAHIGN) carry the 'HIGH' region motif. 3 residues coordinate Zn(2+): C221, H246, and E250. Positions 279–283 (KMSKS) match the 'KMSKS' region motif. K282 provides a ligand contact to ATP.

The protein belongs to the class-I aminoacyl-tRNA synthetase family. In terms of assembly, monomer. The cofactor is Zn(2+).

The protein localises to the cytoplasm. The catalysed reaction is tRNA(Cys) + L-cysteine + ATP = L-cysteinyl-tRNA(Cys) + AMP + diphosphate. This Rhizobium leguminosarum bv. trifolii (strain WSM2304) protein is Cysteine--tRNA ligase.